The chain runs to 327 residues: Zinc transport protein ZntB (327 aa).

At 1 to 273 the chain is on the cytoplasmic side; sequence MEAIKGSDVN…ARRTYTMSLM (273 aa). The helical transmembrane segment at 274 to 294 threads the bilayer; the sequence is AMVFLPSTFLTGLFGVNLGGI. Residues 295–300 lie on the Periplasmic side of the membrane; the sequence is PGGGWQ. The helical transmembrane segment at 301-321 threads the bilayer; it reads FGFSIFCILLVVLIGGVALWL. Over 322 to 327 the chain is Cytoplasmic; it reads HRSKWL.

Belongs to the CorA metal ion transporter (MIT) (TC 1.A.35) family.

It is found in the cell inner membrane. The enzyme catalyses Zn(2+)(out) + H(+)(out) = Zn(2+)(in) + H(+)(in). Functionally, zinc transporter. Acts as a Zn(2+):proton symporter, which likely mediates zinc ion uptake. The polypeptide is Zinc transport protein ZntB (Escherichia coli O139:H28 (strain E24377A / ETEC)).